A 152-amino-acid polypeptide reads, in one-letter code: MRRIVAGKLHGIYVTDANLNYHGSITLDPDHCEEAGILPMEFVEIWNKNSGARISTYVILGERGSRCCILNGAAARTCQPGDQIIICNSIYIRESELPDIRPRVLTFDSDNRVLDRLEYIVKFDDFGRYRFAIERARSLNHASIAGEPKTVA.

Catalysis depends on Ser-24, which acts as the Schiff-base intermediate with substrate; via pyruvic acid. Ser-24 is subject to Pyruvic acid (Ser). A substrate-binding site is contributed by Thr-56. The active-site Proton donor is Tyr-57. Gly-72–Ala-74 is a binding site for substrate.

Belongs to the PanD family. In terms of assembly, heterooctamer of four alpha and four beta subunits. Requires pyruvate as cofactor. In terms of processing, is synthesized initially as an inactive proenzyme, which is activated by self-cleavage at a specific serine bond to produce a beta-subunit with a hydroxyl group at its C-terminus and an alpha-subunit with a pyruvoyl group at its N-terminus.

The protein resides in the cytoplasm. The catalysed reaction is L-aspartate + H(+) = beta-alanine + CO2. It functions in the pathway cofactor biosynthesis; (R)-pantothenate biosynthesis; beta-alanine from L-aspartate: step 1/1. Its function is as follows. Catalyzes the pyruvoyl-dependent decarboxylation of aspartate to produce beta-alanine. The polypeptide is Aspartate 1-decarboxylase (Methylobacterium nodulans (strain LMG 21967 / CNCM I-2342 / ORS 2060)).